Here is a 263-residue protein sequence, read N- to C-terminus: uncharacterized protein (263 aa).

Positions 107-246 constitute a DOD-type homing endonuclease domain; the sequence is ILGVLNGDGS…CCSFLEKLGI (140 aa).

This is an uncharacterized protein from Methanocaldococcus jannaschii (strain ATCC 43067 / DSM 2661 / JAL-1 / JCM 10045 / NBRC 100440) (Methanococcus jannaschii).